A 357-amino-acid polypeptide reads, in one-letter code: Heat-inducible transcription repressor HrcA (357 aa).

This sequence belongs to the HrcA family.

Functionally, negative regulator of class I heat shock genes (grpE-dnaK-dnaJ and groELS operons). Prevents heat-shock induction of these operons. This is Heat-inducible transcription repressor HrcA from Chlorobium phaeovibrioides (strain DSM 265 / 1930) (Prosthecochloris vibrioformis (strain DSM 265)).